A 572-amino-acid chain; its full sequence is MAGLTVRDPAVDRSLRSVFVGNIPYEATEEQLKDIFSEVGPVVSFRLVYDRETGKPKGYGFCEYQDQETALSAMRNLNGREFSGRALRVDNAASEKNKEELKSLGTGAPVIESPYGETISPEDAPESISKAVASLPPEQMFELMKQMKLCVQNSPQEARNMLLQNPQLAYALLQAQVVMRIVDPEIALKILHRQTNIPTLIAGNPQTVHSAGPGSGSSVSMNQQNPQTPQAQTLSGMHVNGAPPLMQASLQAGVAAPGQIPATVTGPGPGSLAPAGGMQAQVGMPGSGPVSMERGQVPMQDPRAAMQRGPLPANVPTPRGLLGDAPNDPRGGTLLSVTGEVEPRGYLGPPHQGPPMHHVPGHDSRGPPPHEMRGGPLTEPRPLMAEPRGPMIDQRGPPLDGRGGRDPRGIDARAMEARGLDARGLEARAMEARAMEARAMEARAMEARAMEVRGMEARSMDTRGPVPGPRGPMPSGIQGPSPINMGAVGPQGSRQVPVMQGAGMQGASIQGGGQPGGFSPGQNQVTPQDHEKAALIMQVLQLTADQIAMLPPEQRQSILILKEQIQKSTGAP.

S14 is modified (phosphoserine). The RRM domain maps to 16–94; sequence RSVFVGNIPY…RALRVDNAAS (79 aa). Residues 108–248 are interactions with CSTF3 and SYMPK; it reads APVIESPYGE…VNGAPPLMQA (141 aa). Residue K189 forms a Glycyl lysine isopeptide (Lys-Gly) (interchain with G-Cter in SUMO2) linkage. The disordered stretch occupies residues 208–230; it reads VHSAGPGSGSSVSMNQQNPQTPQ. Residue R308 is modified to Omega-N-methylarginine. Positions 322 to 382 are disordered; that stretch reads LGDAPNDPRG…RGGPLTEPRP (61 aa). Over residues 360-373 the composition is skewed to basic and acidic residues; it reads PGHDSRGPPPHEMR. One copy of the 1; approximate repeat lies at 410 to 414; that stretch reads IDARA. Positions 410–464 are 11 X 5 AA tandem repeats of M-E-A-R-[AG]; sequence IDARAMEARGLDARGLEARAMEARAMEARAMEARAMEARAMEVRGMEARSMDTRG. Repeat unit 2 spans residues 415 to 419; it reads MEARG. The 3; approximate repeat unit spans residues 420–424; it reads LDARG. A 4; approximate repeat occupies 425-429; it reads LEARA. 4 repeat units span residues 430–434, 435–439, 440–444, and 445–449. The stretch at 450 to 454 is one 9; approximate repeat; the sequence is MEVRG. Copy 10 of the repeat occupies 455 to 459; the sequence is MEARS. The 11; approximate repeat unit spans residues 460–464; sequence MDTRG. Omega-N-methylarginine occurs at positions 463 and 470. The tract at residues 509–572 is interaction with RPO2TC1; sequence IQGGGQPGGF…EQIQKSTGAP (64 aa). At S519 the chain carries Phosphoserine.

The CSTF complex is composed of CSTF1 (50 kDa subunit), CSTF2 (64 kDa subunit) and CSTF3 (77 kDa subunit). CSTF2 directly interacts with CSTF3, SYMPK and RPO2TC1. Interacts with HSF1 in heat-stressed cells. Interacts with CPSF2, CPSF3 and FIP1L1. Interacts with DDX1.

It localises to the nucleus. Its function is as follows. One of the multiple factors required for polyadenylation and 3'-end cleavage of mammalian pre-mRNAs. This subunit is directly involved in the binding to pre-mRNAs. The protein is Cleavage stimulation factor subunit 2 (CSTF2) of Bos taurus (Bovine).